The sequence spans 403 residues: TBC1 domain family member 20 (403 aa).

Residues 1–25 form a disordered region; that stretch reads MALRSAQGDGPTSGHWDGGAEKADF. One can recognise a Rab-GAP TBC domain in the interval 60-246; that stretch reads LLTDEIRRKV…RLYDFFLACH (187 aa). The next 2 helical transmembrane spans lie at 238-258 and 367-387; these read LYDFFLACHPLMPIYFAAVIV and FVKLAVMGLTVALGAAALAVV.

In terms of assembly, (Microbial infection) Directly interacts with the N-terminal amphipathic helix of hepatitis C virus (HCV) NS5A.

Its subcellular location is the membrane. Functionally, GTPase-activating protein (GAP) specific for Rab1 and Rab2 small GTPase families for which it can accelerate the intrinsic GTP hydrolysis rate by more than five orders of magnitude. Also shows GAP activity for RAB18 GTPase. Promotes RAB18 dissociation from the endoplasmic reticulum (ER) membrane into the cytosol, probably through stimulating RAB18 GTP-hydrolysis. Involved in maintaining endoplasmic reticulum structure. In Homo sapiens (Human), this protein is TBC1 domain family member 20.